The chain runs to 415 residues: Very late expression factor 1 (415 aa).

The 187-residue stretch at 171–357 (REIINTILDC…DESDDNDEDD (187 aa)) folds into the Tyr recombinase domain. Residues Arg214, Lys242, Arg307, and His330 contribute to the active site. The tract at residues 339-415 (YLNKYDVGVD…GDDADLLSFN (77 aa)) is disordered. Tyr343 (O-(3'-phospho-DNA)-tyrosine intermediate) is an active-site residue. Residues 346–363 (GVDESDDNDEDDDDDEND) are compositionally biased toward acidic residues. Residues 375 to 404 (NISNYDINNSSSGNSSSNNTSGNDFNNNIS) are compositionally biased toward low complexity.

The protein belongs to the 'phage' integrase family.

Involved in very late gene activation. The polypeptide is Very late expression factor 1 (VLF-1) (Heliothis zea nuclear polyhedrosis virus (HzSNPV)).